Here is a 191-residue protein sequence, read N- to C-terminus: Large ribosomal subunit protein uL3 (191 aa).

Positions 119–138 (AAHGSRFHRRPGSIGNREWP) are disordered.

It belongs to the universal ribosomal protein uL3 family. Part of the 50S ribosomal subunit. Forms a cluster with proteins L14 and L19.

In terms of biological role, one of the primary rRNA binding proteins, it binds directly near the 3'-end of the 23S rRNA, where it nucleates assembly of the 50S subunit. This Helicobacter pylori (strain ATCC 700392 / 26695) (Campylobacter pylori) protein is Large ribosomal subunit protein uL3 (rplC).